A 935-amino-acid chain; its full sequence is Ribonuclease E (935 aa).

One can recognise an S1 motif domain in the interval 39–119; it reads ANIYKGKITR…GNKGAALTTF (81 aa). 2 residues coordinate Mg(2+): D302 and D345. C403 and C406 together coordinate Zn(2+). Residues 403 to 406 form a required for zinc-mediated homotetramerization and catalytic activity region; it reads CPRC. 2 disordered regions span residues 571–669 and 698–743; these read TKSE…DLRK and VQNN…KSPM. Composition is skewed to basic and acidic residues over residues 593–625 and 701–719; these read RSQD…ERNQ and NDEK…ERQR. Basic residues predominate over residues 720–734; the sequence is RTPRHLRAANNQRRR.

It belongs to the RNase E/G family. RNase E subfamily. Component of the RNA degradosome, which is a multiprotein complex involved in RNA processing and mRNA degradation. Within the RNA degradosome, RNase E assembles into a homotetramer formed by a dimer of dimers. Requires Zn(2+) as cofactor. The cofactor is Mg(2+).

Its subcellular location is the cytoplasm. The protein resides in the cell inner membrane. It catalyses the reaction Endonucleolytic cleavage of single-stranded RNA in A- and U-rich regions.. In terms of biological role, endoribonuclease that plays a central role in RNA processing and decay. Required for the maturation of 5S and 16S rRNAs and the majority of tRNAs. Also involved in the degradation of most mRNAs. The polypeptide is Ribonuclease E (Haemophilus influenzae (strain ATCC 51907 / DSM 11121 / KW20 / Rd)).